Consider the following 476-residue polypeptide: Growth/differentiation factor 10 (476 aa).

An N-terminal signal peptide occupies residues 1–29; sequence MAPGLARISLRSQLLPLVPLLLLLRGAGC. The propeptide occupies 30–366; sequence GHRVPSWSSL…EKTMQKARRR (337 aa). Asn-114, Asn-152, and Asn-277 each carry an N-linked (GlcNAc...) asparagine glycan. 2 disordered regions span residues 268-305 and 330-358; these read GDFE…LDER and PRTG…FDEK. 3 cysteine pairs are disulfide-bonded: Cys-374/Cys-441, Cys-403/Cys-473, and Cys-407/Cys-475. Asn-467 carries an N-linked (GlcNAc...) asparagine glycan.

This sequence belongs to the TGF-beta family. Homodimer or heterodimer. Can form a non-covalent complex of the mature region and the pro-region. Costa, costicartilage, femur, calvaria, trachea, aorta and brain. Predominantly in the cerebellum.

The protein resides in the secreted. Growth factor involved in osteogenesis and adipogenesis. Plays an inhibitory role in the process of osteoblast differentiation via SMAD2/3 pathway. Plays an inhibitory role in the process of adipogenesis. The sequence is that of Growth/differentiation factor 10 from Rattus norvegicus (Rat).